We begin with the raw amino-acid sequence, 499 residues long: Maturase K (499 aa).

Belongs to the intron maturase 2 family. MatK subfamily.

It is found in the plastid. Its subcellular location is the chloroplast. Its function is as follows. Usually encoded in the trnK tRNA gene intron. Probably assists in splicing its own and other chloroplast group II introns. In Macrozamia communis (Burrawang palm), this protein is Maturase K.